We begin with the raw amino-acid sequence, 164 residues long: Thiol peroxidase (164 aa).

The 146-residue stretch at 18-163 folds into the Thioredoxin domain; that stretch reads VNEGDIAPNF…FEAALKAYRN (146 aa). The active-site Cysteine sulfenic acid (-SOH) intermediate is C60. C60 and C93 are oxidised to a cystine.

This sequence belongs to the peroxiredoxin family. Tpx subfamily. As to quaternary structure, homodimer.

The enzyme catalyses a hydroperoxide + [thioredoxin]-dithiol = an alcohol + [thioredoxin]-disulfide + H2O. In terms of biological role, thiol-specific peroxidase that catalyzes the reduction of hydrogen peroxide and organic hydroperoxides to water and alcohols, respectively. Plays a role in cell protection against oxidative stress by detoxifying peroxides. In Staphylococcus epidermidis (strain ATCC 35984 / DSM 28319 / BCRC 17069 / CCUG 31568 / BM 3577 / RP62A), this protein is Thiol peroxidase.